Reading from the N-terminus, the 230-residue chain is Dephospho-CoA kinase (230 aa).

The 204-residue stretch at 3–206 (LVGLTGGIAS…EPLTWKERLR (204 aa)) folds into the DPCK domain. Position 8 to 15 (8 to 15 (GGIASGKS)) interacts with ATP.

It belongs to the CoaE family.

The enzyme catalyses 3'-dephospho-CoA + ATP = ADP + CoA + H(+). It participates in cofactor biosynthesis; coenzyme A biosynthesis; CoA from (R)-pantothenate: step 5/5. Catalyzes the phosphorylation of the 3'-hydroxyl group of dephosphocoenzyme A to form coenzyme A. The polypeptide is Dephospho-CoA kinase (Oryza sativa subsp. japonica (Rice)).